The sequence spans 256 residues: MTEIVAIPAFADNYIWLAVDRNRRLAAVVDPGDAEPVEAALRASGLRLSAILITHHHHDHTGGVEELLAAHPVPVYGPADESVPGVSQPLREPDAFEVPGLGLPLRVLDVPGHTAGHIALVADGALFSGDALFAGGCGRLFEGTPEQMYASLGKLAALPEATRVYCGHEYTLANLRFAHQVEPDNPNLTQRLRQAEAARQRGEPTVPSRMADEHATNPFLRAHLPAVRTAAERWSGQTLDEPVAVFAALRRWKDQS.

Residues H55, H57, D59, H60, H113, D130, and H168 each contribute to the Zn(2+) site.

This sequence belongs to the metallo-beta-lactamase superfamily. Glyoxalase II family. As to quaternary structure, monomer. Zn(2+) is required as a cofactor.

The enzyme catalyses an S-(2-hydroxyacyl)glutathione + H2O = a 2-hydroxy carboxylate + glutathione + H(+). It functions in the pathway secondary metabolite metabolism; methylglyoxal degradation; (R)-lactate from methylglyoxal: step 2/2. Thiolesterase that catalyzes the hydrolysis of S-D-lactoyl-glutathione to form glutathione and D-lactic acid. This Alkalilimnicola ehrlichii (strain ATCC BAA-1101 / DSM 17681 / MLHE-1) protein is Hydroxyacylglutathione hydrolase.